A 453-amino-acid chain; its full sequence is BPI fold-containing family B member 6 (453 aa).

An N-terminal signal peptide occupies residues M1–A18. N114 carries N-linked (GlcNAc...) asparagine glycosylation. A disulfide bridge connects residues C137 and C174. N190 carries an N-linked (GlcNAc...) asparagine glycan.

Belongs to the BPI/LBP/Plunc superfamily. BPI/LBP family. As to expression, detected at very low levels in normal tonsils, and at higher levels in hypertrophic tonsils.

The protein localises to the secreted. This is BPI fold-containing family B member 6 (BPIFB6) from Homo sapiens (Human).